The primary structure comprises 276 residues: Acyl-[acyl-carrier-protein]--UDP-N-acetylglucosamine O-acyltransferase (276 aa).

This sequence belongs to the transferase hexapeptide repeat family. LpxA subfamily. As to quaternary structure, homotrimer.

It localises to the cytoplasm. It catalyses the reaction a (3R)-hydroxyacyl-[ACP] + UDP-N-acetyl-alpha-D-glucosamine = a UDP-3-O-[(3R)-3-hydroxyacyl]-N-acetyl-alpha-D-glucosamine + holo-[ACP]. It functions in the pathway glycolipid biosynthesis; lipid IV(A) biosynthesis; lipid IV(A) from (3R)-3-hydroxytetradecanoyl-[acyl-carrier-protein] and UDP-N-acetyl-alpha-D-glucosamine: step 1/6. Involved in the biosynthesis of lipid A, a phosphorylated glycolipid that anchors the lipopolysaccharide to the outer membrane of the cell. This Rippkaea orientalis (strain PCC 8801 / RF-1) (Cyanothece sp. (strain PCC 8801)) protein is Acyl-[acyl-carrier-protein]--UDP-N-acetylglucosamine O-acyltransferase.